Consider the following 234-residue polypeptide: Sugar fermentation stimulation protein homolog (234 aa).

The protein belongs to the SfsA family.

The polypeptide is Sugar fermentation stimulation protein homolog (Shewanella sp. (strain MR-4)).